We begin with the raw amino-acid sequence, 968 residues long: RNA polymerase-associated protein RapA (968 aa).

Residues 164–334 (DVGRRHAPRV…FARLRLLDPN (171 aa)) enclose the Helicase ATP-binding domain. ATP is bound at residue 177-184 (DEVGLGKT). Residues 280–283 (DEAH) carry the DEAH box motif. Residues 490–644 (RVEWLMGYLT…TCPTGRTIYD (155 aa)) enclose the Helicase C-terminal domain.

Belongs to the SNF2/RAD54 helicase family. RapA subfamily. In terms of assembly, interacts with the RNAP. Has a higher affinity for the core RNAP than for the holoenzyme. Its ATPase activity is stimulated by binding to RNAP.

Functionally, transcription regulator that activates transcription by stimulating RNA polymerase (RNAP) recycling in case of stress conditions such as supercoiled DNA or high salt concentrations. Probably acts by releasing the RNAP, when it is trapped or immobilized on tightly supercoiled DNA. Does not activate transcription on linear DNA. Probably not involved in DNA repair. This Enterobacter sp. (strain 638) protein is RNA polymerase-associated protein RapA.